Reading from the N-terminus, the 154-residue chain is Protein X (154 aa).

The segment at Pro68–Phe117 is mitochondrial targeting sequence.

Belongs to the orthohepadnavirus protein X family. As to quaternary structure, may form homodimer. May interact with host CEBPA, CFLAR, CREB1, DDB1, E4F1, HBXIP, HSPD1/HSP60, NFKBIA, POLR2E and SMAD4. Interacts with host SMC5-SMC6 complex and induces its degradation. Interacts with host TRPC4AP; leading to prevent ubiquitination of TRPC4AP. Interacts with host PLSCR1; this interaction promotes ubiquitination and degradation of HBx and impairs HBx-mediated cell proliferation. In terms of processing, a fraction may be phosphorylated in insect cells and HepG2 cells, a human hepatoblastoma cell line. Phosphorylated in vitro by host protein kinase C or mitogen-activated protein kinase. N-acetylated in insect cells.

It is found in the host cytoplasm. The protein localises to the host nucleus. The protein resides in the host mitochondrion. Its function is as follows. Multifunctional protein that plays a role in silencing host antiviral defenses and promoting viral transcription. Does not seem to be essential for HBV infection. May be directly involved in development of cirrhosis and liver cancer (hepatocellular carcinoma). Most of cytosolic activities involve modulation of cytosolic calcium. The effect on apoptosis is controversial depending on the cell types in which the studies have been conducted. May induce apoptosis by localizing in mitochondria and causing loss of mitochondrial membrane potential. May also modulate apoptosis by binding host CFLAR, a key regulator of the death-inducing signaling complex (DISC). Promotes viral transcription by using the host E3 ubiquitin ligase DDB1 to target the SMC5-SMC6 complex to proteasomal degradation. This host complex would otherwise bind to viral episomal DNA, and prevents its transcription. Moderately stimulates transcription of many different viral and cellular transcription elements. Promoters and enhancers stimulated by HBx contain DNA binding sites for NF-kappa-B, AP-1, AP-2, c-EBP, ATF/CREB, or the calcium-activated factor NF-AT. The chain is Protein X from Hepatitis B virus genotype D subtype ayw (isolate France/Tiollais/1979) (HBV-D).